Reading from the N-terminus, the 127-residue chain is uncharacterized protein (127 aa).

The protein localises to the mitochondrion. This is an uncharacterized protein from Arabidopsis thaliana (Mouse-ear cress).